A 920-amino-acid chain; its full sequence is Alpha-L-rhamnosidase (920 aa).

An N-terminal signal peptide occupies residues 1–19; that stretch reads MCVVRTFWFAVLTVIFAVS. C20 carries N-palmitoyl cysteine lipidation. C20 carries the S-diacylglycerol cysteine lipid modification. Alpha-L-rhamnose is bound by residues D500, 504 to 506, D513, and W565; that span reads RDE. E506 serves as the catalytic Proton donor. E779 (proton acceptor) is an active-site residue. H800 lines the alpha-L-rhamnose pocket.

It belongs to the glycosyl hydrolase 78 family.

The protein resides in the cell membrane. It catalyses the reaction Hydrolysis of terminal non-reducing alpha-L-rhamnose residues in alpha-L-rhamnosides.. Alpha-L-rhamnosidase involved in ulvan degradation. Ulvan is the main polysaccharide component of the Ulvales (green seaweed) cell wall. It is composed of disaccharide building blocks comprising 3-sulfated rhamnose (Rha3S) linked to D-glucuronic acid (GlcA), L-iduronic acid (IduA), or D-xylose (Xyl). The enzyme is able to degrade p-nitrophenyl-alpha-L-rhamnopyranoside (PNP-Rha) in vitro. Incubating the enzyme with the products obtained after degradation with ulvan lyase and beta-glucuronyl hydrolase (i.e. the trisaccharides beta-alpha-L-Rha3S-IduA-Rha3S and beta-alpha-L-Rha3S-GlcA-Rha3S) showed no degradation, suggesting that the enzyme is active on neutral rhamnose and that desulfation of the oligosaccharide must be achieved before cleavage of rhamnose. This chain is Alpha-L-rhamnosidase, found in Alteromonas sp. (strain LOR).